The primary structure comprises 189 residues: Myb-like protein T (189 aa).

Residues 121 to 172 enclose the Myb-like domain; sequence NWSPDEQKALMVEVSTLGNKSEINWFFISQQLFLKGISRNARECQRKHESIQ.

The chain is Myb-like protein T (mybT) from Dictyostelium discoideum (Social amoeba).